Reading from the N-terminus, the 440-residue chain is C4-dicarboxylate TRAP transporter large permease protein DctM (440 aa).

13 helical membrane-spanning segments follow: residues 4-24, 54-74, 89-109, 112-132, 148-168, 181-201, 230-250, 255-275, 291-311, 318-338, 349-369, 370-390, and 410-430; these read LIIFGLLIALMLTGMPISISL, FEIMAIPFFILAGNFLTHGGV, WHGGLGLAGVIACALFAAVSG, PATVVAIGSVILPAMVNQGFP, ILIPPSIVMVMYAVATSGMVV, VGELFMAGVVPGLMLAGFLAF, AAWGLMLIVVVIGGIYAGIFT, AAMSAVYAFFISVFVYKDLTL, MLLYIITNAVLFSFLMAHEGI, WMVNAGLSWWMFLIIVNILLL, IVLIMAPILFPVAVRLGIDPV, HFGIMIVVNMEVGMCHPPVGL, and VWPWLLTMLAFLVLVTYVPAI.

It belongs to the TRAP transporter large permease family. As to quaternary structure, the complex comprises the extracytoplasmic solute receptor protein DctP, and the two transmembrane proteins DctQ and DctM.

It is found in the cell inner membrane. Its function is as follows. Part of the tripartite ATP-independent periplasmic (TRAP) transport system DctPQM involved in C4-dicarboxylates uptake. In Rhodobacter capsulatus (Rhodopseudomonas capsulata), this protein is C4-dicarboxylate TRAP transporter large permease protein DctM.